The following is a 365-amino-acid chain: Mannitol dehydrogenase (365 aa).

Zn(2+) contacts are provided by Cys-50, His-72, Cys-103, Cys-106, Cys-109, Cys-117, and Cys-166.

The protein belongs to the zinc-containing alcohol dehydrogenase family. Requires Zn(2+) as cofactor.

Its subcellular location is the cytoplasm. The catalysed reaction is D-mannitol + NAD(+) = D-mannose + NADH + H(+). Functionally, oxidizes mannitol to mannose. Provides the initial step by which translocated mannitol is committed to central metabolism and, by regulating mannitol pool size, is important in regulating salt tolerance at the cellular level. The polypeptide is Mannitol dehydrogenase (MTD) (Apium graveolens (Celery)).